Here is a 209-residue protein sequence, read N- to C-terminus: Kynurenine formamidase (209 aa).

Trp-20 contacts substrate. 3 residues coordinate Zn(2+): His-50, His-54, and Asp-56. Catalysis depends on His-60, which acts as the Proton donor/acceptor. The Zn(2+) site is built by His-161 and Glu-173.

The protein belongs to the Cyclase 1 superfamily. KynB family. As to quaternary structure, homodimer. It depends on Zn(2+) as a cofactor.

The catalysed reaction is N-formyl-L-kynurenine + H2O = L-kynurenine + formate + H(+). Its pathway is amino-acid degradation; L-tryptophan degradation via kynurenine pathway; L-kynurenine from L-tryptophan: step 2/2. Catalyzes the hydrolysis of N-formyl-L-kynurenine to L-kynurenine, the second step in the kynurenine pathway of tryptophan degradation. This Bacillus cereus (strain ATCC 14579 / DSM 31 / CCUG 7414 / JCM 2152 / NBRC 15305 / NCIMB 9373 / NCTC 2599 / NRRL B-3711) protein is Kynurenine formamidase.